We begin with the raw amino-acid sequence, 179 residues long: Transcription factor 21 (179 aa).

Residues 20–87 form a disordered region; the sequence is CDGLKMDSNK…QVQRNAANAR (68 aa). Residues 33–46 show a composition bias toward low complexity; that stretch reads TSNESTEESSNCEN. The segment covering 70–80 has biased composition (polar residues); the sequence is SGVSQEGKQVQ. Positions 79–131 constitute a bHLH domain; the sequence is VQRNAANARERARMRVLSKAFSRLKTTLPWVPPDTKLSKLDTLRLASSYIAHL.

As to quaternary structure, efficient DNA binding requires dimerization with another bHLH protein. Forms a heterodimer with TCF3 and binds the E box (5'-CANNTG-3').

It is found in the nucleus. Involved in epithelial-mesenchymal interactions in kidney and lung morphogenesis that include epithelial differentiation and branching morphogenesis. May play a role in the specification or differentiation of one or more subsets of epicardial cell types. This chain is Transcription factor 21 (TCF21), found in Homo sapiens (Human).